The chain runs to 1960 residues: Myosin-9 (1960 aa).

N-acetylalanine is present on Ala-2. The segment at 2-838 (AQQAADKYLY…RLFTKVKPLL (837 aa)) is mediates interaction with LIMCH1. The residue at position 8 (Lys-8) is an N6-acetyllysine. Phosphotyrosine is present on Tyr-11. The 51-residue stretch at 27-77 (AAKKLVWVPSDKSGFEPASLKEEVGEEAIVELVENGKKVKVNKDDIQKMNP) folds into the Myosin N-terminal SH3-like domain. The 696-residue stretch at 81-776 (SKVEDMAELT…VLAHLEEERD (696 aa)) folds into the Myosin motor domain. N6-acetyllysine is present on Lys-102. ATP is bound at residue 174–181 (GESGAGKT). An N6-acetyllysine mark is found at Lys-299, Lys-435, and Lys-613. Ser-628 carries the phosphoserine modification. The actin-binding stretch occupies residues 654-676 (LAKLMATLRNTNPNFVRCIIPNH). Phosphotyrosine is present on Tyr-754. The 30-residue stretch at 779 to 808 (ITDVIIGFQACCRGYLARKAFAKRQQQLTA) folds into the IQ domain. The stretch at 837 to 1926 (LLQVSRQEEE…LKNKLRRGDL (1090 aa)) forms a coiled coil. Lys-850 bears the N6-succinyllysine mark. 3 positions are modified to N6-acetyllysine: Lys-860, Lys-975, and Lys-1024. The segment covering 1035–1055 (RLRREEKQRQELEKTRRKLEG) has biased composition (basic and acidic residues). The disordered stretch occupies residues 1035–1057 (RLRREEKQRQELEKTRRKLEGDS). Ser-1114 carries the phosphoserine modification. The tract at residues 1118–1137 (EDLESERASRNKAEKQKRDL) is disordered. The segment covering 1122–1137 (SERASRNKAEKQKRDL) has biased composition (basic and acidic residues). An N6-acetyllysine mark is found at Lys-1234, Lys-1249, Lys-1357, Lys-1392, Lys-1404, Lys-1410, Lys-1459, and Lys-1638. The residue at position 1669 (Lys-1669) is an N6-succinyllysine. Position 1714 is a phosphoserine (Ser-1714). An N6-acetyllysine mark is found at Lys-1793, Lys-1802, and Lys-1845. The tract at residues 1877–1960 (RQLEEAEEEA…ADGAEAKPAE (84 aa)) is disordered. At Arg-1923 the chain carries Omega-N-methylarginine. At Ser-1943 the chain carries Phosphoserine. A compositionally biased stretch (basic and acidic residues) spans 1948–1960 (DGKADGAEAKPAE).

It belongs to the TRAFAC class myosin-kinesin ATPase superfamily. Myosin family. Myosin is a hexameric protein that consists of 2 heavy chain subunits (MHC), 2 alkali light chain subunits (MLC) and 2 regulatory light chain subunits (MLC-2). Interacts with RASIP1. Interacts with DDR1. Interacts with PDLIM2. Interacts with SVIL. Interacts with HTRA3. Interacts with Myo7a. Interacts with CFAP95. Interacts with LIMCH1; independently of the integration of MYH9 into the myosin complex. Interacts with RAB3A. Interacts with ZBED4. Interacts with S100A4; this interaction increases cell motility. In terms of assembly, (Microbial infection) Interacts with herpes simplex virus 1/HHV-1 envelope glycoprotein B. In terms of processing, ISGylated. Ubiquitination. As to expression, in the kidney, expressed in the glomeruli. Also expressed in leukocytes.

The protein localises to the cytoplasm. It is found in the cytoskeleton. Its subcellular location is the cell cortex. The protein resides in the cytoplasmic vesicle. It localises to the secretory vesicle. The protein localises to the cortical granule. It is found in the cell membrane. Functionally, cellular myosin that appears to play a role in cytokinesis, cell shape, and specialized functions such as secretion and capping. Required for cortical actin clearance prior to oocyte exocytosis. Promotes cell motility in conjunction with S100A4. During cell spreading, plays an important role in cytoskeleton reorganization, focal contact formation (in the margins but not the central part of spreading cells), and lamellipodial retraction; this function is mechanically antagonized by MYH10. In terms of biological role, (Microbial infection) Acts as a receptor for herpes simplex virus 1/HHV-1 envelope glycoprotein B. The polypeptide is Myosin-9 (MYH9) (Homo sapiens (Human)).